We begin with the raw amino-acid sequence, 128 residues long: Protein yippee-like At3g08990 (128 aa).

In terms of domain architecture, Yippee spans 12–109 (LVYSCKYCQT…LERFKVLGPY (98 aa)). Residues Cys16, Cys19, Cys72, and Cys75 each coordinate Zn(2+).

It belongs to the yippee family.

This chain is Protein yippee-like At3g08990, found in Arabidopsis thaliana (Mouse-ear cress).